Here is a 493-residue protein sequence, read N- to C-terminus: Ketol-acid reductoisomerase (NADP(+)) (493 aa).

Residues 15–208 (AQLGKCRFMQ…GGDRAGVLES (194 aa)) form the KARI N-terminal Rossmann domain. Residues 45–48 (CGAQ), Arg-68, Arg-76, Ser-78, and 108–110 (DKQ) contribute to the NADP(+) site. The active site involves His-132. An NADP(+)-binding site is contributed by Gly-158. 2 KARI C-terminal knotted domains span residues 209–344 (SFVA…NAPA) and 345–486 (FAGK…MKDM). Residues Asp-217, Glu-221, Glu-389, and Glu-393 each coordinate Mg(2+). Residue Ser-414 coordinates substrate.

The protein belongs to the ketol-acid reductoisomerase family. Requires Mg(2+) as cofactor.

The enzyme catalyses (2R)-2,3-dihydroxy-3-methylbutanoate + NADP(+) = (2S)-2-acetolactate + NADPH + H(+). It catalyses the reaction (2R,3R)-2,3-dihydroxy-3-methylpentanoate + NADP(+) = (S)-2-ethyl-2-hydroxy-3-oxobutanoate + NADPH + H(+). The protein operates within amino-acid biosynthesis; L-isoleucine biosynthesis; L-isoleucine from 2-oxobutanoate: step 2/4. Its pathway is amino-acid biosynthesis; L-valine biosynthesis; L-valine from pyruvate: step 2/4. Involved in the biosynthesis of branched-chain amino acids (BCAA). Catalyzes an alkyl-migration followed by a ketol-acid reduction of (S)-2-acetolactate (S2AL) to yield (R)-2,3-dihydroxy-isovalerate. In the isomerase reaction, S2AL is rearranged via a Mg-dependent methyl migration to produce 3-hydroxy-3-methyl-2-ketobutyrate (HMKB). In the reductase reaction, this 2-ketoacid undergoes a metal-dependent reduction by NADPH to yield (R)-2,3-dihydroxy-isovalerate. In Aeromonas hydrophila subsp. hydrophila (strain ATCC 7966 / DSM 30187 / BCRC 13018 / CCUG 14551 / JCM 1027 / KCTC 2358 / NCIMB 9240 / NCTC 8049), this protein is Ketol-acid reductoisomerase (NADP(+)).